The sequence spans 482 residues: Glutamyl-tRNA(Gln) amidotransferase subunit A (482 aa).

Catalysis depends on charge relay system residues Lys74 and Ser149. Ser173 functions as the Acyl-ester intermediate in the catalytic mechanism.

It belongs to the amidase family. GatA subfamily. In terms of assembly, heterotrimer of A, B and C subunits.

It carries out the reaction L-glutamyl-tRNA(Gln) + L-glutamine + ATP + H2O = L-glutaminyl-tRNA(Gln) + L-glutamate + ADP + phosphate + H(+). Functionally, allows the formation of correctly charged Gln-tRNA(Gln) through the transamidation of misacylated Glu-tRNA(Gln) in organisms which lack glutaminyl-tRNA synthetase. The reaction takes place in the presence of glutamine and ATP through an activated gamma-phospho-Glu-tRNA(Gln). In Prochlorococcus marinus (strain MIT 9215), this protein is Glutamyl-tRNA(Gln) amidotransferase subunit A.